The chain runs to 316 residues: Acetaldehyde dehydrogenase 3 (316 aa).

12-15 (SGNI) contacts NAD(+). Residue Cys-132 is the Acyl-thioester intermediate of the active site. NAD(+) contacts are provided by residues 163 to 171 (SAGPGTRAN) and Asn-289.

This sequence belongs to the acetaldehyde dehydrogenase family.

The catalysed reaction is acetaldehyde + NAD(+) + CoA = acetyl-CoA + NADH + H(+). The sequence is that of Acetaldehyde dehydrogenase 3 (mhpF) from Comamonas testosteroni (Pseudomonas testosteroni).